We begin with the raw amino-acid sequence, 195 residues long: CASP-like protein 2C2 (195 aa).

At Met1–Arg18 the chain is on the cytoplasmic side. Residues Leu19 to Ala39 form a helical membrane-spanning segment. At Glu40 to Gln57 the chain is on the extracellular side. The helical transmembrane segment at Ala58–Val78 threads the bilayer. Topologically, residues Arg79 to Ala106 are cytoplasmic. The chain crosses the membrane as a helical span at residues Tyr107 to Val127. Over Glu128–Gln145 the chain is Extracellular. The chain crosses the membrane as a helical span at residues Ala146 to Phe166. Topologically, residues Ser167–His195 are cytoplasmic.

It belongs to the Casparian strip membrane proteins (CASP) family. As to quaternary structure, homodimer and heterodimers.

The protein localises to the cell membrane. This Oryza sativa subsp. japonica (Rice) protein is CASP-like protein 2C2.